We begin with the raw amino-acid sequence, 185 residues long: Ribosome-recycling factor (185 aa).

The interval 138-159 (KVKKLEKDKEISEDESKKAQEQ) is disordered.

Belongs to the RRF family.

It is found in the cytoplasm. Functionally, responsible for the release of ribosomes from messenger RNA at the termination of protein biosynthesis. May increase the efficiency of translation by recycling ribosomes from one round of translation to another. This Helicobacter acinonychis (strain Sheeba) protein is Ribosome-recycling factor.